The sequence spans 73 residues: Gas vesicle protein M2 (73 aa).

The protein belongs to the gas vesicle GvpA family. As to quaternary structure, gvpF to GvpM interact with each other in vitro, and may form multi-subunit complex(es). Might interact with GvpA.

The protein localises to the gas vesicle. Functionally, proteins GvpF to GvpM might be involved in nucleating gas vesicle formation. A minor component of the gas vesicle. Gas vesicles are hollow, gas filled proteinaceous nanostructures found in several microbial planktonic microorganisms. They allow positioning of halobacteria at the optimal depth for growth in the poorly aerated, shallow brine pools of their habitat. Its function is as follows. Expression of 2 c-vac DNA fragments containing 2 divergently transcribed regions (gvpE-gvpF-gvpG-gvpH-gvpI-gvpJ-gvpK-gvpL-gvpM and gvpA-gvpC-gvpN-gvpO) allows H.volcanii to produce gas vesicles. This Halobacterium salinarum (strain ATCC 700922 / JCM 11081 / NRC-1) (Halobacterium halobium) protein is Gas vesicle protein M2.